A 343-amino-acid chain; its full sequence is Holliday junction branch migration complex subunit RuvB (343 aa).

Residues M1–Q20 form a disordered region. The segment at M1 to Y185 is large ATPase domain (RuvB-L). Residues L24, R25, G66, K69, T70, T71, E132–F134, R175, Y185, and R222 each bind ATP. T70 contacts Mg(2+). The segment at E186 to E256 is small ATPAse domain (RuvB-S). Positions R259–L343 are head domain (RuvB-H). R295, R314, and R319 together coordinate DNA.

Belongs to the RuvB family. As to quaternary structure, homohexamer. Forms an RuvA(8)-RuvB(12)-Holliday junction (HJ) complex. HJ DNA is sandwiched between 2 RuvA tetramers; dsDNA enters through RuvA and exits via RuvB. An RuvB hexamer assembles on each DNA strand where it exits the tetramer. Each RuvB hexamer is contacted by two RuvA subunits (via domain III) on 2 adjacent RuvB subunits; this complex drives branch migration. In the full resolvosome a probable DNA-RuvA(4)-RuvB(12)-RuvC(2) complex forms which resolves the HJ.

Its subcellular location is the cytoplasm. The enzyme catalyses ATP + H2O = ADP + phosphate + H(+). In terms of biological role, the RuvA-RuvB-RuvC complex processes Holliday junction (HJ) DNA during genetic recombination and DNA repair, while the RuvA-RuvB complex plays an important role in the rescue of blocked DNA replication forks via replication fork reversal (RFR). RuvA specifically binds to HJ cruciform DNA, conferring on it an open structure. The RuvB hexamer acts as an ATP-dependent pump, pulling dsDNA into and through the RuvAB complex. RuvB forms 2 homohexamers on either side of HJ DNA bound by 1 or 2 RuvA tetramers; 4 subunits per hexamer contact DNA at a time. Coordinated motions by a converter formed by DNA-disengaged RuvB subunits stimulates ATP hydrolysis and nucleotide exchange. Immobilization of the converter enables RuvB to convert the ATP-contained energy into a lever motion, pulling 2 nucleotides of DNA out of the RuvA tetramer per ATP hydrolyzed, thus driving DNA branch migration. The RuvB motors rotate together with the DNA substrate, which together with the progressing nucleotide cycle form the mechanistic basis for DNA recombination by continuous HJ branch migration. Branch migration allows RuvC to scan DNA until it finds its consensus sequence, where it cleaves and resolves cruciform DNA. The polypeptide is Holliday junction branch migration complex subunit RuvB (Magnetococcus marinus (strain ATCC BAA-1437 / JCM 17883 / MC-1)).